A 414-amino-acid chain; its full sequence is Esterase FrsA (414 aa).

It belongs to the FrsA family.

It catalyses the reaction a carboxylic ester + H2O = an alcohol + a carboxylate + H(+). Functionally, catalyzes the hydrolysis of esters. This is Esterase FrsA from Shigella dysenteriae serotype 1 (strain Sd197).